A 684-amino-acid polypeptide reads, in one-letter code: Histone-lysine N-methyltransferase SETMAR (684 aa).

Residues 1–345 (MFAEAAKTTR…RLTLETMKMM (345 aa)) are histone-lysine N-methyltransferase. The 64-residue stretch at 73-136 (PGCICVKTPC…HCRNRVVQKG (64 aa)) folds into the Pre-SET domain. Zn(2+) contacts are provided by Cys75, Cys77, Cys82, Cys87, Cys89, Cys118, Cys122, Cys124, and Cys128. One can recognise an SET domain in the interval 139 to 263 (FHFQVFKTHK…PEEELSYDYS (125 aa)). Residues 149–151 (KGW), Tyr192, Arg220, and 223–224 (NH) each bind S-adenosyl-L-methionine. Zn(2+) contacts are provided by Cys226, Cys287, Cys289, and Cys294. In terms of domain architecture, Post-SET spans 283 to 299 (LRKPCYCGAKSCTAFLP). Positions 346–684 (LDKKQIRAIF…CVDCNGSYFD (339 aa)) are mariner transposase Hsmar1. 2 consecutive DNA-binding regions (H-T-H motif) follow at residues 364-395 (KAAE…KFCK) and 428-448 (TTRE…RHLK). Asp496 serves as a coordination point for Mg(2+). The residue at position 498 (Lys498) is an N6-methyllysine. Phosphoserine; by CHEK1 is present on Ser508. Asp588 is a binding site for Mg(2+).

It in the N-terminal section; belongs to the class V-like SAM-binding methyltransferase superfamily. The protein in the C-terminal section; belongs to the mariner transposase family. As to quaternary structure, homodimer. Interacts with PRPF19; required for SETMAR recruitment to damaged DNA sites. Interacts with PCNA. Interacts with TOP2A; stimulates TOP2A topoisomerase activity. May interact with RAD9A and/or RAD9B. The cofactor is Mg(2+). In terms of processing, methylated. Methylation regulates activity in DNA decatenation. Phosphorylated at Ser-508 by CHEK1 and dephosphorylated by protein phosphatase 2A/PP2A. Phosphorylation at Ser-508 is enhanced by DNA damage and promotes recruitment to damaged DNA. It stimulates DNA repair and impairs replication fork restart. In terms of tissue distribution, widely expressed, with highest expression in placenta and ovary and lowest expression in skeletal muscle.

The protein localises to the nucleus. The protein resides in the chromosome. It catalyses the reaction L-lysyl(36)-[histone H3] + 2 S-adenosyl-L-methionine = N(6),N(6)-dimethyl-L-lysyl(36)-[histone H3] + 2 S-adenosyl-L-homocysteine + 2 H(+). Protein derived from the fusion of a methylase with the transposase of an Hsmar1 transposon that plays a role in DNA double-strand break repair, stalled replication fork restart and DNA integration. DNA-binding protein, it is indirectly recruited to sites of DNA damage through protein-protein interactions. Also has kept a sequence-specific DNA-binding activity recognizing the 19-mer core of the 5'-terminal inverted repeats (TIRs) of the Hsmar1 element and displays a DNA nicking and end joining activity. In parallel, has a histone methyltransferase activity and methylates 'Lys-4' and 'Lys-36' of histone H3. Specifically mediates dimethylation of H3 'Lys-36' at sites of DNA double-strand break and may recruit proteins required for efficient DSB repair through non-homologous end-joining. Also regulates replication fork processing, promoting replication fork restart and regulating DNA decatenation through stimulation of the topoisomerase activity of TOP2A. This Homo sapiens (Human) protein is Histone-lysine N-methyltransferase SETMAR.